The primary structure comprises 226 residues: MSDISLSQLLEAGVHFGHKAYRWNPKMFPYIYSEVNNIHILDLVQSATLLKEANLYLESAARENKTFLFVGTKRQASTLIAQEAKRCDSYYVNHRWLGGMLTNWSTLKERIAHLKDLEQQEANNTFDLLTKKEGALRRKELKKLRRHLDGIKDMKNLPDIAIVIDQKRETTAIRECRKLGIPVVSILDTNCDPDLVDIPIPGNDDAVRSIKLILKSLTDSILIGKS.

The protein belongs to the universal ribosomal protein uS2 family.

It localises to the plastid. The protein localises to the chloroplast. In Phaeodactylum tricornutum (strain CCAP 1055/1), this protein is Small ribosomal subunit protein uS2c (rps2).